We begin with the raw amino-acid sequence, 623 residues long: DEAD-box ATP-dependent RNA helicase 52C (623 aa).

The segment at 1–120 (MATPSRTSWA…DGDAAAGAGD (120 aa)) is disordered. Low complexity predominate over residues 10–29 (ADVADADPAPAPAPAANGPA). Over residues 54–69 (APPPSSSSSSAPPPRA) the composition is skewed to pro residues. Over residues 70-83 (APGLLAPRPAAAGM) the composition is skewed to low complexity. The segment covering 84 to 97 (GRMGGGGGGGGFGG) has biased composition (gly residues). Positions 155–183 (GTFAEIDLGQALNDNIRRCKYVRPTPVQR) match the Q motif motif. The region spanning 186 to 372 (IPISLAGRDL…SDFLENYIFL (187 aa)) is the Helicase ATP-binding domain. ATP is bound at residue 199-206 (AQTGSGKT). A DEAD box motif is present at residues 316–319 (DEAD). The Helicase C-terminal domain maps to 399-550 (HLMDLLHAQR…EVPAWLSRYA (152 aa)). Positions 553 to 595 (PSYGGGGGRNRRSGGGSRFGGRDFRRDSSSGRGGGDYYGGGSS) are disordered. Over residues 555–571 (YGGGGGRNRRSGGGSRF) the composition is skewed to gly residues. Over residues 572–581 (GGRDFRRDSS) the composition is skewed to basic and acidic residues. Positions 583–595 (GRGGGDYYGGGSS) are enriched in gly residues.

The protein belongs to the DEAD box helicase family. DDX3/DED1 subfamily.

The enzyme catalyses ATP + H2O = ADP + phosphate + H(+). This is DEAD-box ATP-dependent RNA helicase 52C from Oryza sativa subsp. japonica (Rice).